A 406-amino-acid chain; its full sequence is Odorant receptor 42a (406 aa).

Over 1 to 44 (MDLRRWFPTLYTQSKDSPVRSRDATLYLLRCVFLMGVRKPPAKF) the chain is Cytoplasmic. Residues 45–65 (FVAYVLWSFALNFCSTFYQPI) form a helical membrane-spanning segment. The Extracellular portion of the chain corresponds to 66 to 86 (GFLTGYISHLSEFSPGEFLTS). Residues 87-107 (LQVAFNAWSCSTKVLIVWALV) form a helical membrane-spanning segment. The Cytoplasmic portion of the chain corresponds to 108–142 (KRFDEANNLLDEMDRRITDPGERLQIHRAVSLSNR). A helical transmembrane segment spans residues 143-163 (IFFFFMAVYMVYATNTFLSAI). The Extracellular segment spans residues 164–181 (FIGRPPYQNYYPFLDWRS). Residues 182–202 (STLHLALQAGLEYFAMAGACF) traverse the membrane as a helical segment. The Cytoplasmic segment spans residues 203 to 271 (QDVCVDCYPV…DCLRPVISGT (69 aa)). The helical transmembrane segment at 272-292 (IFVQFLVVGLVLGFTLINIVL) threads the bilayer. Over 293 to 298 (FANLGS) the chain is Extracellular. The chain crosses the membrane as a helical span at residues 299-319 (AIAALSFMAAVLLETTPFCIL). At 320-359 (CNYLTEDCYKLADALFQSNWIDEEKRYQKTLMYFLQKLQQ) the chain is on the cytoplasmic side. Residues 360-380 (PITFMAMNVFPISVGTNISVT) form a helical membrane-spanning segment. The Extracellular segment spans residues 381–406 (KFSFSVFTLVKQMNISEKLAKSEMEE). Asparagine 394 is a glycosylation site (N-linked (GlcNAc...) asparagine).

This sequence belongs to the insect chemoreceptor superfamily. Heteromeric odorant receptor channel (TC 1.A.69) family. Or2a subfamily. In terms of assembly, interacts with Orco. Complexes exist early in the endomembrane system in olfactory sensory neurons (OSNs), coupling these complexes to the conserved ciliary trafficking pathway.

The protein localises to the cell membrane. In terms of biological role, odorant receptor which mediates acceptance or avoidance behavior, depending on its substrates. The odorant receptor repertoire encodes a large collection of odor stimuli that vary widely in identity, intensity, and duration. May form a complex with Orco to form odorant-sensing units, providing sensitive and prolonged odorant signaling and calcium permeability. Involved in the behavioral responses to butanol, ethyl acetate, propyl acetate, and pentyl acetate. Also responds to pyrazines. The sequence is that of Odorant receptor 42a (Or42a) from Drosophila melanogaster (Fruit fly).